The chain runs to 143 residues: Brain ribonuclease (143 aa).

Residues 1 to 21 (KESAAAKFRRQHMDSGSSSSG) are disordered. Lys-7 and Arg-10 together coordinate substrate. Residue His-12 is the Proton acceptor of the active site. 4 disulfides stabilise this stretch: Cys-26-Cys-84, Cys-40-Cys-95, Cys-58-Cys-110, and Cys-65-Cys-72. Position 41–45 (41–45 (KPVNT)) interacts with substrate. Asn-62 carries N-linked (GlcNAc...) asparagine glycosylation. The substrate site is built by Lys-66 and Arg-85. His-119 functions as the Proton donor in the catalytic mechanism. An O-linked (GalNAc...) threonine glycan is attached at Thr-129. O-linked (GalNAc...) serine glycosylation occurs at Ser-133.

The protein belongs to the pancreatic ribonuclease family.

The protein resides in the secreted. This chain is Brain ribonuclease (BRN), found in Ovis aries (Sheep).